A 275-amino-acid polypeptide reads, in one-letter code: 5'-nucleotidase SurE (275 aa).

A divalent metal cation is bound by residues aspartate 14, aspartate 15, serine 46, and asparagine 104.

It belongs to the SurE nucleotidase family. The cofactor is a divalent metal cation.

The protein resides in the cytoplasm. The catalysed reaction is a ribonucleoside 5'-phosphate + H2O = a ribonucleoside + phosphate. Its function is as follows. Nucleotidase that shows phosphatase activity on nucleoside 5'-monophosphates. The polypeptide is 5'-nucleotidase SurE (Synechocystis sp. (strain ATCC 27184 / PCC 6803 / Kazusa)).